The following is a 190-amino-acid chain: Probable RNA-binding protein 18 (190 aa).

Residues 25 to 106 (HRLWIGNLDP…KKLVVRWAHA (82 aa)) form the RRM domain. Residues 166–190 (VYSYFKPPDKKRTTPYSRTAWKSRR) form a disordered region.

In Bos taurus (Bovine), this protein is Probable RNA-binding protein 18 (RBM18).